A 608-amino-acid polypeptide reads, in one-letter code: Glutamine--fructose-6-phosphate aminotransferase [isomerizing] (608 aa).

Residue Cys-2 is the Nucleophile; for GATase activity of the active site. The region spanning 2-217 is the Glutamine amidotransferase type-2 domain; the sequence is CGIVGILGRG…DGDWAVLTRA (216 aa). SIS domains lie at 284–423 and 456–598; these read LPFD…ERGK and LARY…VDQP. Catalysis depends on Lys-603, which acts as the For Fru-6P isomerization activity.

Its subcellular location is the cytoplasm. The catalysed reaction is D-fructose 6-phosphate + L-glutamine = D-glucosamine 6-phosphate + L-glutamate. Its function is as follows. Involved in the production of the root hair deformation (HAD) factor specifically on soybean. The chain is Glutamine--fructose-6-phosphate aminotransferase [isomerizing] (nodM) from Bradyrhizobium diazoefficiens (strain JCM 10833 / BCRC 13528 / IAM 13628 / NBRC 14792 / USDA 110).